A 343-amino-acid chain; its full sequence is Holliday junction branch migration complex subunit RuvB (343 aa).

Positions 4–193 (TDNLTAAQPQ…FGIVSRLEFY (190 aa)) are large ATPase domain (RuvB-L). Residues Leu-32, Arg-33, Gly-74, Lys-77, Thr-78, Thr-79, 140–142 (EDY), Arg-183, Tyr-193, and Arg-230 contribute to the ATP site. Residue Thr-78 participates in Mg(2+) binding. The small ATPAse domain (RuvB-S) stretch occupies residues 194 to 264 (ENRDLTTIVS…VADAALSMLD (71 aa)). A head domain (RuvB-H) region spans residues 267-343 (AQGLDVMDRK…YLHFGLPVEK (77 aa)). DNA-binding residues include Arg-322 and Arg-327.

Belongs to the RuvB family. In terms of assembly, homohexamer. Forms an RuvA(8)-RuvB(12)-Holliday junction (HJ) complex. HJ DNA is sandwiched between 2 RuvA tetramers; dsDNA enters through RuvA and exits via RuvB. An RuvB hexamer assembles on each DNA strand where it exits the tetramer. Each RuvB hexamer is contacted by two RuvA subunits (via domain III) on 2 adjacent RuvB subunits; this complex drives branch migration. In the full resolvosome a probable DNA-RuvA(4)-RuvB(12)-RuvC(2) complex forms which resolves the HJ.

It localises to the cytoplasm. The catalysed reaction is ATP + H2O = ADP + phosphate + H(+). Functionally, the RuvA-RuvB-RuvC complex processes Holliday junction (HJ) DNA during genetic recombination and DNA repair, while the RuvA-RuvB complex plays an important role in the rescue of blocked DNA replication forks via replication fork reversal (RFR). RuvA specifically binds to HJ cruciform DNA, conferring on it an open structure. The RuvB hexamer acts as an ATP-dependent pump, pulling dsDNA into and through the RuvAB complex. RuvB forms 2 homohexamers on either side of HJ DNA bound by 1 or 2 RuvA tetramers; 4 subunits per hexamer contact DNA at a time. Coordinated motions by a converter formed by DNA-disengaged RuvB subunits stimulates ATP hydrolysis and nucleotide exchange. Immobilization of the converter enables RuvB to convert the ATP-contained energy into a lever motion, pulling 2 nucleotides of DNA out of the RuvA tetramer per ATP hydrolyzed, thus driving DNA branch migration. The RuvB motors rotate together with the DNA substrate, which together with the progressing nucleotide cycle form the mechanistic basis for DNA recombination by continuous HJ branch migration. Branch migration allows RuvC to scan DNA until it finds its consensus sequence, where it cleaves and resolves cruciform DNA. This Neisseria gonorrhoeae (strain NCCP11945) protein is Holliday junction branch migration complex subunit RuvB.